A 122-amino-acid chain; its full sequence is Small ribosomal subunit protein uS12c (122 aa).

This sequence belongs to the universal ribosomal protein uS12 family. In terms of assembly, part of the 30S ribosomal subunit.

It localises to the plastid. The protein localises to the chloroplast. In terms of biological role, with S4 and S5 plays an important role in translational accuracy. Located at the interface of the 30S and 50S subunits. The sequence is that of Small ribosomal subunit protein uS12c (rps12) from Chloranthus spicatus (Chulantree).